The following is a 788-amino-acid chain: MKDKSIKVLEFNKIQEILKNYTCTKAAKDIIEDLKPYDSVYEVREHLEEAKEAFKLLITKGAPPFEGVYDIRNGIYLAEKGSALLPGQLLKIAAVLRCARRFKEYINHKEEEESYRVLENICEGIFSLPKIEEEIFNAIEGEDEIADRASSTLYNIRRSLKEKNYSVRDKINSLVRSYSSYLQENIYTVRGDRYVLPVKAEHKGAVPGLVHDQSSTGATLFIEPMSLVNLNNEIKELMLKEKAEIERILTVLSAKINANITGVKTDANIVWELDFIFAKAKFASEYNCTCPTINNEGIVDIIEGRHPLIDRREVVPISVKLGEEFTSLMITGPNTGGKTVTLKTVGLIHLMAMSGLMIPARENSVISYFNNVFADIGDEQSIEQSLSTFSSHMKNIVEIMDKADENSLVLFDELGAGTDPTEGAALAISILENLRKRGTKIIATTHYSELKAYALRKEGVENASVEFDVETLRPTYRLLIGIPGKSNAFEISKRLGLPDYIIDFARENISNENIRFEELIENLQEKSIKAQEDARLAENLKLERDKEKKKYEEKLEGLQKVRDNALIDARREAKNIIKEAKEEADKILKDIRQLERMGYSSDARRKLEEERKKLKDKLDSIEEKEIKTVHKGEALKNVKEGDEVLLASINQKVIVLSKPDNKGDVLVQAGIMKITANIKDLRAAKGSNFNSSSSKIKKSKKLNLNLRRVESSVDLRGMDAEEAIYTVDKYLDEAYLGGLGEVTIVHGKGTGVLRKTIMDMLKGHSHVKRHRLGEYGEGGTGVTVVELK.

332–339 is an ATP binding site; the sequence is GPNTGGKT. In terms of domain architecture, Smr spans 713 to 788; the sequence is VDLRGMDAEE…GTGVTVVELK (76 aa).

It belongs to the DNA mismatch repair MutS family. MutS2 subfamily. Homodimer. Binds to stalled ribosomes, contacting rRNA.

Functionally, endonuclease that is involved in the suppression of homologous recombination and thus may have a key role in the control of bacterial genetic diversity. Acts as a ribosome collision sensor, splitting the ribosome into its 2 subunits. Detects stalled/collided 70S ribosomes which it binds and splits by an ATP-hydrolysis driven conformational change. Acts upstream of the ribosome quality control system (RQC), a ribosome-associated complex that mediates the extraction of incompletely synthesized nascent chains from stalled ribosomes and their subsequent degradation. Probably generates substrates for RQC. This chain is Endonuclease MutS2, found in Clostridium botulinum (strain Langeland / NCTC 10281 / Type F).